The primary structure comprises 178 residues: Ribosome maturation factor RimM (178 aa).

The 78-residue stretch at 101-178 (ADEYYWYQLV…VMRVEWDADF (78 aa)) folds into the PRC barrel domain.

It belongs to the RimM family. In terms of assembly, binds ribosomal protein uS19.

It localises to the cytoplasm. An accessory protein needed during the final step in the assembly of 30S ribosomal subunit, possibly for assembly of the head region. Essential for efficient processing of 16S rRNA. May be needed both before and after RbfA during the maturation of 16S rRNA. It has affinity for free ribosomal 30S subunits but not for 70S ribosomes. In Pseudomonas putida (strain GB-1), this protein is Ribosome maturation factor RimM.